A 231-amino-acid polypeptide reads, in one-letter code: Uridylate cyclase (231 aa).

Residues 46–178 (TVLYADLDGS…RAANYAAKLT (133 aa)) enclose the Guanylate cyclase domain. Tyr49 lines the a ribonucleoside 5'-triphosphate pocket. The Mn(2+) site is built by Asp51 and Asp95. A ribonucleoside 5'-triphosphate is bound at residue Arg96.

Belongs to the adenylyl cyclase class-4/guanylyl cyclase family. Pyrimidine cyclase subfamily. Homodimer. Requires Mn(2+) as cofactor.

The protein resides in the cytoplasm. It carries out the reaction UTP = 3',5'-cyclic UMP + diphosphate. In terms of biological role, pycsar (pyrimidine cyclase system for antiphage resistance) provides immunity against bacteriophage. The pyrimidine cyclase (PycC) synthesizes cyclic nucleotides in response to infection; these serve as specific second messenger signals. The signal activates the adjacent effector, leading to bacterial cell death and abortive phage infection. A clade B Pycsar system. Its function is as follows. The pyrimidine cyclase gene of a two-gene Pycsar system, generates cyclic UMP (cUMP) from UTP probably in response to bacteriophage infection. Expression of this and adjacent effector XpPycTIR (AC P0DV29) confers resistance to bacteriophage T7. When cells expressing the Pycsar system are infected phage T7 at low multiplicity of infection (0.2 MOI) the culture survives, at 2.0 MOI bacteria enter growth arrest. The same cells enter growth arrest after exposure to 2.5 mM cUMP but not cCMP; the effector protein responds only to the cUMP produced by its cognate NTP cyclase. The protein is Uridylate cyclase of Xanthomonas perforans.